Here is a 291-residue protein sequence, read N- to C-terminus: Elongation factor Ts (291 aa).

The interval 79-82 (TDFV) is involved in Mg(2+) ion dislocation from EF-Tu.

Belongs to the EF-Ts family.

The protein localises to the cytoplasm. Associates with the EF-Tu.GDP complex and induces the exchange of GDP to GTP. It remains bound to the aminoacyl-tRNA.EF-Tu.GTP complex up to the GTP hydrolysis stage on the ribosome. The sequence is that of Elongation factor Ts from Leuconostoc mesenteroides subsp. mesenteroides (strain ATCC 8293 / DSM 20343 / BCRC 11652 / CCM 1803 / JCM 6124 / NCDO 523 / NBRC 100496 / NCIMB 8023 / NCTC 12954 / NRRL B-1118 / 37Y).